The primary structure comprises 173 residues: 2-C-methyl-D-erythritol 2,4-cyclodiphosphate synthase (173 aa).

Residues Asp-17 and His-19 each coordinate a divalent metal cation. 4-CDP-2-C-methyl-D-erythritol 2-phosphate-binding positions include 17–19 and 49–50; these read DVH and HS. A divalent metal cation is bound at residue His-57. 4-CDP-2-C-methyl-D-erythritol 2-phosphate is bound by residues 76-80, 147-150, Phe-154, and Arg-157; these read FPNTD and TTTE.

Belongs to the IspF family. Homotrimer. The cofactor is a divalent metal cation.

It catalyses the reaction 4-CDP-2-C-methyl-D-erythritol 2-phosphate = 2-C-methyl-D-erythritol 2,4-cyclic diphosphate + CMP. The protein operates within isoprenoid biosynthesis; isopentenyl diphosphate biosynthesis via DXP pathway; isopentenyl diphosphate from 1-deoxy-D-xylulose 5-phosphate: step 4/6. Its function is as follows. Involved in the biosynthesis of isopentenyl diphosphate (IPP) and dimethylallyl diphosphate (DMAPP), two major building blocks of isoprenoid compounds. Catalyzes the conversion of 4-diphosphocytidyl-2-C-methyl-D-erythritol 2-phosphate (CDP-ME2P) to 2-C-methyl-D-erythritol 2,4-cyclodiphosphate (ME-CPP) with a corresponding release of cytidine 5-monophosphate (CMP). In Ehrlichia canis (strain Jake), this protein is 2-C-methyl-D-erythritol 2,4-cyclodiphosphate synthase.